The sequence spans 246 residues: Tyrosine recombinase XerD-like (246 aa).

The Core-binding (CB) domain maps to 1–72; the sequence is MINDINNFIE…AVNQFLFFLY (72 aa). Residues 84–246 enclose the Tyr recombinase domain; sequence QETEKITLTQ…TPITLERYYR (163 aa). Active-site residues include lysine 149 and arginine 212. Tyrosine 244 serves as the catalytic O-(3'-phospho-DNA)-tyrosine intermediate.

Belongs to the 'phage' integrase family. XerD-like subfamily.

Its subcellular location is the cytoplasm. In terms of biological role, putative tyrosine recombinase. Not involved in the cutting and rejoining of the recombining DNA molecules on dif(SL) site. This Streptococcus agalactiae serotype III (strain NEM316) protein is Tyrosine recombinase XerD-like.